We begin with the raw amino-acid sequence, 547 residues long: Chaperonin GroEL (547 aa).

Residues 30–33 (TLGP), K51, 87–91 (DGTTT), G415, and D496 contribute to the ATP site. The disordered stretch occupies residues 527 to 547 (SDKAEPMPMRGGMGGMGGMDF). Over residues 537 to 547 (GGMGGMGGMDF) the composition is skewed to gly residues.

The protein belongs to the chaperonin (HSP60) family. Forms a cylinder of 14 subunits composed of two heptameric rings stacked back-to-back. Interacts with the co-chaperonin GroES.

It localises to the cytoplasm. It carries out the reaction ATP + H2O + a folded polypeptide = ADP + phosphate + an unfolded polypeptide.. Together with its co-chaperonin GroES, plays an essential role in assisting protein folding. The GroEL-GroES system forms a nano-cage that allows encapsulation of the non-native substrate proteins and provides a physical environment optimized to promote and accelerate protein folding. The polypeptide is Chaperonin GroEL (Rickettsia rickettsii (strain Sheila Smith)).